The primary structure comprises 377 residues: Gibberellin 20 oxidase 1 (377 aa).

Positions 222 to 322 (ENDSIMRLNY…RKSLAFFLCP (101 aa)) constitute a Fe2OG dioxygenase domain. Residues His-247, Asp-249, and His-303 each coordinate Fe cation. Arg-313 is a catalytic residue.

It belongs to the iron/ascorbate-dependent oxidoreductase family. GA20OX subfamily. Requires Fe(2+) as cofactor. L-ascorbate serves as cofactor. Highly expressed in stems and inflorescence tissues. Detected in seeds, roots, leaves and siliques.

The enzyme catalyses gibberellin A12 + 2 2-oxoglutarate + 3 O2 + H(+) = gibberellin A9 + 2 succinate + 3 CO2 + 2 H2O. The catalysed reaction is gibberellin A12 + 2-oxoglutarate + O2 = gibberellin A15 + succinate + CO2. It carries out the reaction gibberellin A15 + 2-oxoglutarate + O2 = gibberellin A24 + succinate + CO2 + H2O. It catalyses the reaction gibberellin A53 + 2-oxoglutarate + O2 = gibberellin A44 + succinate + CO2. It participates in plant hormone biosynthesis; gibberellin biosynthesis. Its function is as follows. Key oxidase enzyme in the biosynthesis of gibberellin that catalyzes the conversion of GA12 to GA9, via a three-step oxidation at C-20 of the GA skeleton. GA53 is less effectively oxidized than GA12 and is only oxidized one step to GA44. Involved in the promotion of the floral transition, fertility and silique elongation, but plays only a minor role in elongation of seedling organs. Acts redundantly with GA20OX2. In Arabidopsis thaliana (Mouse-ear cress), this protein is Gibberellin 20 oxidase 1 (GA20OX1).